The sequence spans 124 residues: SLIQFETLIMKVAKKSGMFWYSNYGCYCGWGGQGRPQDATDRCCFVHDCCYGKVTGCDPKMDVYSFSEENGDIVCGGDDPCKKEICECDRAAAICFRDNLNTYNDKKYWAFGAKNCPQEESEPC.

Intrachain disulfides connect cysteine 26-cysteine 116, cysteine 28-cysteine 44, cysteine 43-cysteine 95, cysteine 49-cysteine 124, cysteine 50-cysteine 88, cysteine 57-cysteine 81, and cysteine 75-cysteine 86. Ca(2+) is bound by residues tyrosine 27, glycine 29, and glycine 31. Residue histidine 47 is part of the active site. Position 48 (aspartate 48) interacts with Ca(2+). The active site involves aspartate 89.

It belongs to the phospholipase A2 family. Group II subfamily. D49 sub-subfamily. The cofactor is Ca(2+). In terms of tissue distribution, expressed by the venom gland.

It is found in the secreted. The catalysed reaction is a 1,2-diacyl-sn-glycero-3-phosphocholine + H2O = a 1-acyl-sn-glycero-3-phosphocholine + a fatty acid + H(+). Snake venom phospholipase A2 (PLA2) that inhibits ADP-induced platelet aggregation. PLA2 catalyzes the calcium-dependent hydrolysis of the 2-acyl groups in 3-sn-phosphoglycerides. In Gloydius ussuriensis (Ussuri mamushi), this protein is Acidic phospholipase A2.